A 406-amino-acid chain; its full sequence is Tyrosine--tRNA ligase (406 aa).

Residue Tyr35 coordinates L-tyrosine. A 'HIGH' region motif is present at residues 40 to 49 (PTADSLHVGH). Residues Tyr168 and Gln172 each coordinate L-tyrosine. Positions 228-232 (KMGKT) match the 'KMSKS' region motif. Lys231 contacts ATP. In terms of domain architecture, S4 RNA-binding spans 340–404 (STVLDIIAKT…RGKKNYNKIE (65 aa)).

This sequence belongs to the class-I aminoacyl-tRNA synthetase family. TyrS type 1 subfamily. As to quaternary structure, homodimer.

Its subcellular location is the cytoplasm. The enzyme catalyses tRNA(Tyr) + L-tyrosine + ATP = L-tyrosyl-tRNA(Tyr) + AMP + diphosphate + H(+). In terms of biological role, catalyzes the attachment of tyrosine to tRNA(Tyr) in a two-step reaction: tyrosine is first activated by ATP to form Tyr-AMP and then transferred to the acceptor end of tRNA(Tyr). In Clostridium botulinum (strain Alaska E43 / Type E3), this protein is Tyrosine--tRNA ligase.